The following is a 156-amino-acid chain: Acyl carrier protein, mitochondrial (156 aa).

Residues 1-68 (MASRVLSAYV…GRVTQLCRQY (68 aa)) constitute a mitochondrion transit peptide. The Carrier domain maps to 77–152 (EGIQDRVLYV…EIVDYIADKK (76 aa)). Position 88 is an N6-acetyllysine (Lys88). Ser112 is modified (O-(pantetheine 4'-phosphoryl)serine).

This sequence belongs to the acyl carrier protein (ACP) family. As to quaternary structure, mammalian complex I is composed of 45 different subunits. Interacts with ETFRF1. Identified in a complex composed of MALSU1, MIEF1 upstream open reading frame protein and NDUFAB1; within the trimeric complex, MIEF1 upstream open reading frame protein functions as a bridging scaffold that interacts with MALSU1 on one side, and with NDUFAB1 on the other side. The complex interacts with the mitochondrial large ribosomal subunit. Interacts with alpha-1-microglobulin chain; this interaction is required for the maintenance of mitochondrial redox homeostasis. Component of the mitochondrial core iron-sulfur cluster (ISC) complex composed of NFS1, LYRM4, NDUFAB1, ISCU, FXN, and FDX2; this complex is a heterohexamer containing two copies of each monomer. Component of the cyteine desulfurase complex composed of NFS1, LYRM4 and NDUFAB1; this complex contributes to the stability and cysteine desulfurase activity of NFS1. Post-translationally, phosphopantetheinylation at Ser-112 is essential for interactions with LYR motif-containing proteins.

It is found in the mitochondrion. Carrier of the growing fatty acid chain in fatty acid biosynthesis. Accessory and non-catalytic subunit of the mitochondrial membrane respiratory chain NADH dehydrogenase (Complex I), which functions in the transfer of electrons from NADH to the respiratory chain. Accessory protein, of the core iron-sulfur cluster (ISC) assembly complex, that regulates, in association with LYRM4, the stability and the cysteine desulfurase activity of NFS1 and participates in the [2Fe-2S] clusters assembly on the scaffolding protein ISCU. The core iron-sulfur cluster (ISC) assembly complex is involved in the de novo synthesis of a [2Fe-2S] cluster, the first step of the mitochondrial iron-sulfur protein biogenesis. This process is initiated by the cysteine desulfurase complex (NFS1:LYRM4:NDUFAB1) that produces persulfide which is delivered on the scaffold protein ISCU in a FXN-dependent manner. Then this complex is stabilized by FDX2 which provides reducing equivalents to accomplish the [2Fe-2S] cluster assembly. Finally, the [2Fe-2S] cluster is transferred from ISCU to chaperone proteins, including HSCB, HSPA9 and GLRX5. The sequence is that of Acyl carrier protein, mitochondrial from Gorilla gorilla gorilla (Western lowland gorilla).